Here is a 127-residue protein sequence, read N- to C-terminus: Putative platinum sensitivity protein 1 (127 aa).

In Saccharomyces cerevisiae (strain ATCC 204508 / S288c) (Baker's yeast), this protein is Putative platinum sensitivity protein 1 (PSY1).